We begin with the raw amino-acid sequence, 368 residues long: MWIKELELKHYRNYDHLLASFSSGLNVFIGNNAQGKTNFLEAIYFLSLTRSHRTRADKELIHFDHSTVSLTGKIQRISGTVDLEINLSDKGRVTKINALKQAKLSDYIGTMMVVLFAPEDLQLVKGAPSLRRKFIDIDLGQIKPVYLSELSHYNHVLKQRNSYLKSAQQIDAAFLAVLDEQLAGYGARVMEHRIDFINALEKEANTHHQAISNGLESLSLSYQSSVVFDKKTNIYQQFLHQLEKNHQKDFFRKNTSVGPHRDDLAFYINGMNANFASQGQHRSLILSLKMAEVSLMKALTGDNPILLLDDVMSELDNTRQTKLLETVIKENVQTFITTTSLDHLSQLPEGIRIFHVTKGTVQIDSDIH.

Glycine 30–threonine 37 is a binding site for ATP.

It belongs to the RecF family.

It is found in the cytoplasm. Its function is as follows. The RecF protein is involved in DNA metabolism; it is required for DNA replication and normal SOS inducibility. RecF binds preferentially to single-stranded, linear DNA. It also seems to bind ATP. The polypeptide is DNA replication and repair protein RecF (Streptococcus pyogenes serotype M6 (strain ATCC BAA-946 / MGAS10394)).